The chain runs to 185 residues: Ribosome-recycling factor (185 aa).

Belongs to the RRF family.

Its subcellular location is the cytoplasm. In terms of biological role, responsible for the release of ribosomes from messenger RNA at the termination of protein biosynthesis. May increase the efficiency of translation by recycling ribosomes from one round of translation to another. This chain is Ribosome-recycling factor, found in Aeromonas salmonicida (strain A449).